A 91-amino-acid chain; its full sequence is DNA-directed RNA polymerase subunit omega (91 aa).

This sequence belongs to the RNA polymerase subunit omega family. The RNAP catalytic core consists of 2 alpha, 1 beta, 1 beta' and 1 omega subunit. When a sigma factor is associated with the core the holoenzyme is formed, which can initiate transcription.

The enzyme catalyses RNA(n) + a ribonucleoside 5'-triphosphate = RNA(n+1) + diphosphate. Its function is as follows. Promotes RNA polymerase assembly. Latches the N- and C-terminal regions of the beta' subunit thereby facilitating its interaction with the beta and alpha subunits. The protein is DNA-directed RNA polymerase subunit omega of Enterobacter sp. (strain 638).